Consider the following 125-residue polypeptide: Photosystem I reaction center subunit IV, chloroplastic (125 aa).

A chloroplast-targeting transit peptide spans 1–34 (MASIASSVAVRLGLTQVLPNKNFSSPRSTRLVVR). Residues 42–57 (APAAASPEGEAPKAAA) show a composition bias toward low complexity. The tract at residues 42 to 68 (APAAASPEGEAPKAAAKPPPIGPKRGS) is disordered.

It belongs to the PsaE family.

It is found in the plastid. It localises to the chloroplast thylakoid membrane. In terms of biological role, stabilizes the interaction between PsaC and the PSI core, assists the docking of the ferredoxin to PSI and interacts with ferredoxin-NADP oxidoreductase. This Spinacia oleracea (Spinach) protein is Photosystem I reaction center subunit IV, chloroplastic (PSAE-1).